The chain runs to 307 residues: N-acetylmuramic acid 6-phosphate etherase (307 aa).

The SIS domain maps to 62 to 225 (IVLAFQKGAR…TTASMIRIGK (164 aa)). Residue glutamate 90 is the Proton donor of the active site. The active site involves glutamate 121.

This sequence belongs to the GCKR-like family. MurNAc-6-P etherase subfamily. Homodimer.

It carries out the reaction N-acetyl-D-muramate 6-phosphate + H2O = N-acetyl-D-glucosamine 6-phosphate + (R)-lactate. It functions in the pathway amino-sugar metabolism; 1,6-anhydro-N-acetylmuramate degradation. Its pathway is amino-sugar metabolism; N-acetylmuramate degradation. The protein operates within cell wall biogenesis; peptidoglycan recycling. Specifically catalyzes the cleavage of the D-lactyl ether substituent of MurNAc 6-phosphate, producing GlcNAc 6-phosphate and D-lactate. Together with AnmK, is also required for the utilization of anhydro-N-acetylmuramic acid (anhMurNAc) either imported from the medium or derived from its own cell wall murein, and thus plays a role in cell wall recycling. The chain is N-acetylmuramic acid 6-phosphate etherase from Mesorhizobium japonicum (strain LMG 29417 / CECT 9101 / MAFF 303099) (Mesorhizobium loti (strain MAFF 303099)).